We begin with the raw amino-acid sequence, 166 residues long: Probable protein tyrosine phosphatase type IVA A (166 aa).

A Tyrosine-protein phosphatase domain is found at 10 to 164 (NPASLVESST…YKSKKKSSCR (155 aa)). A disulfide bridge links cysteine 52 with cysteine 107. The active-site Proton donor is the aspartate 75. Cysteine 107 serves as the catalytic Phosphocysteine intermediate. Residue 108 to 113 (VAGLGR) coordinates phosphate. Arginine 113 is a binding site for substrate. Cysteine 163 carries the post-translational modification Cysteine methyl ester. The S-farnesyl cysteine moiety is linked to residue cysteine 163. Residues 164–166 (RIM) constitute a propeptide, removed in mature form.

Belongs to the protein-tyrosine phosphatase family.

Its subcellular location is the membrane. The enzyme catalyses O-phospho-L-tyrosyl-[protein] + H2O = L-tyrosyl-[protein] + phosphate. This chain is Probable protein tyrosine phosphatase type IVA A, found in Dictyostelium discoideum (Social amoeba).